The sequence spans 103 residues: Large ribosomal subunit protein bL21 (103 aa).

This sequence belongs to the bacterial ribosomal protein bL21 family. As to quaternary structure, part of the 50S ribosomal subunit. Contacts protein L20.

In terms of biological role, this protein binds to 23S rRNA in the presence of protein L20. This is Large ribosomal subunit protein bL21 from Hamiltonella defensa subsp. Acyrthosiphon pisum (strain 5AT).